The sequence spans 859 residues: Leucine--tRNA ligase (859 aa).

The short motif at 42–52 (PYPSGRLHMGH) is the 'HIGH' region element. The 'KMSKS' region motif lies at 618–622 (KMSKS). Residue Lys-621 coordinates ATP.

The protein belongs to the class-I aminoacyl-tRNA synthetase family.

The protein resides in the cytoplasm. It catalyses the reaction tRNA(Leu) + L-leucine + ATP = L-leucyl-tRNA(Leu) + AMP + diphosphate. The protein is Leucine--tRNA ligase of Shewanella amazonensis (strain ATCC BAA-1098 / SB2B).